The primary structure comprises 297 residues: Protein phosphatase PTC7 homolog (297 aa).

The N-terminal 27 residues, methionine 1–tyrosine 27, are a transit peptide targeting the mitochondrion. The PPM-type phosphatase domain maps to serine 28 to valine 292. Mn(2+)-binding residues include aspartate 71, glycine 72, and aspartate 216.

Belongs to the PP2C family. Requires Mg(2+) as cofactor. Mn(2+) serves as cofactor.

Its subcellular location is the mitochondrion matrix. The catalysed reaction is O-phospho-L-seryl-[protein] + H2O = L-seryl-[protein] + phosphate. It catalyses the reaction O-phospho-L-threonyl-[protein] + H2O = L-threonyl-[protein] + phosphate. Its function is as follows. Protein phosphatase which positively regulates biosynthesis of the ubiquinone, coenzyme Q. Dephosphorylates the ubiquinone biosynthesis protein coq7 which is likely to lead to its activation. The sequence is that of Protein phosphatase PTC7 homolog (pptc7) from Danio rerio (Zebrafish).